The sequence spans 319 residues: Replication factor C small subunit 2 (319 aa).

44-51 is an ATP binding site; it reads GPPGTGKT.

This sequence belongs to the activator 1 small subunits family. RfcS subfamily. Heteromultimer composed of small subunits (RfcS) and large subunits (RfcL).

Part of the RFC clamp loader complex which loads the PCNA sliding clamp onto DNA. This chain is Replication factor C small subunit 2, found in Pyrobaculum aerophilum (strain ATCC 51768 / DSM 7523 / JCM 9630 / CIP 104966 / NBRC 100827 / IM2).